The primary structure comprises 464 residues: Glutamate decarboxylase beta (464 aa).

Residue Lys275 is modified to N6-(pyridoxal phosphate)lysine.

It belongs to the group II decarboxylase family. The cofactor is pyridoxal 5'-phosphate.

The catalysed reaction is L-glutamate + H(+) = 4-aminobutanoate + CO2. In terms of biological role, converts internalized glutamate to GABA and increases the internal pH. Involved in glutamate-dependent acid resistance in gastric fluid. This Listeria monocytogenes serovar 1/2a (strain ATCC BAA-679 / EGD-e) protein is Glutamate decarboxylase beta (gadB).